The chain runs to 408 residues: Tryptophan synthase beta chain (408 aa).

The residue at position 97 (K97) is an N6-(pyridoxal phosphate)lysine.

Belongs to the TrpB family. Tetramer of two alpha and two beta chains. Requires pyridoxal 5'-phosphate as cofactor.

The catalysed reaction is (1S,2R)-1-C-(indol-3-yl)glycerol 3-phosphate + L-serine = D-glyceraldehyde 3-phosphate + L-tryptophan + H2O. Its pathway is amino-acid biosynthesis; L-tryptophan biosynthesis; L-tryptophan from chorismate: step 5/5. The beta subunit is responsible for the synthesis of L-tryptophan from indole and L-serine. This is Tryptophan synthase beta chain (trpB) from Pseudomonas syringae pv. syringae.